We begin with the raw amino-acid sequence, 146 residues long: Bifunctional adenosine 5'-phosphosulfate phosphorylase/adenylylsulfatase HINT4 (146 aa).

One can recognise an HIT domain in the interval 9–120 (IFCEIVRNPT…YVPRWKAIKY (112 aa)). The Histidine triad motif motif lies at 101–105 (HLHLH). The active-site Tele-AMP-histidine intermediate is His-105.

In terms of assembly, homodimer.

It localises to the peroxisome. It catalyses the reaction sulfate + ADP + H(+) = adenosine 5'-phosphosulfate + phosphate. The catalysed reaction is adenosine 5'-phosphosulfate + H2O = sulfate + AMP + 2 H(+). Its activity is regulated as follows. The adenosine 5'-phosphosulfate phosphorylase activity is enhanced at low pH. Functionally, possesses adenylylsulfatase activity in vitro, releasing AMP and sulfate from adenylyl sulfate. Also possesses adenosine 5'-phosphosulfate (APS) phosphorylase activity in vitro. Catalyzes the phosphorolysis of APS, leading to ADP and sulfate. The chain is Bifunctional adenosine 5'-phosphosulfate phosphorylase/adenylylsulfatase HINT4 from Arabidopsis thaliana (Mouse-ear cress).